We begin with the raw amino-acid sequence, 306 residues long: Glutaminase (306 aa).

Substrate is bound by residues serine 61, asparagine 111, glutamate 157, asparagine 164, tyrosine 188, tyrosine 240, and valine 258.

The protein belongs to the glutaminase family. In terms of assembly, homotetramer.

It carries out the reaction L-glutamine + H2O = L-glutamate + NH4(+). This Psychrobacter cryohalolentis (strain ATCC BAA-1226 / DSM 17306 / VKM B-2378 / K5) protein is Glutaminase.